Consider the following 426-residue polypeptide: tRNA modification GTPase MnmE (426 aa).

(6S)-5-formyl-5,6,7,8-tetrahydrofolate contacts are provided by Arg20, Glu77, and Met117. The TrmE-type G domain occupies 213–350 (GFEVAILGAP…LLTDIEGVLS (138 aa)). A K(+)-binding site is contributed by Asn223. GTP-binding positions include 223–228 (NAGKST), 242–248 (SDVPGTT), and 267–270 (DTAG). Ser227 contacts Mg(2+). K(+) contacts are provided by Ser242, Val244, and Thr247. A Mg(2+)-binding site is contributed by Thr248. Residue Lys426 participates in (6S)-5-formyl-5,6,7,8-tetrahydrofolate binding.

Belongs to the TRAFAC class TrmE-Era-EngA-EngB-Septin-like GTPase superfamily. TrmE GTPase family. In terms of assembly, homodimer. Heterotetramer of two MnmE and two MnmG subunits. Requires K(+) as cofactor.

Its subcellular location is the cytoplasm. Exhibits a very high intrinsic GTPase hydrolysis rate. Involved in the addition of a carboxymethylaminomethyl (cmnm) group at the wobble position (U34) of certain tRNAs, forming tRNA-cmnm(5)s(2)U34. This chain is tRNA modification GTPase MnmE, found in Jannaschia sp. (strain CCS1).